The primary structure comprises 469 residues: Dihydroorotate dehydrogenase (quinone), mitochondrial (469 aa).

The N-terminal 37 residues, 1-37, are a transit peptide targeting the mitochondrion; that stretch reads MSSSAAALAWRRSLRDALLRGSAWRGAPAANSAAARL. The helical transmembrane segment at 62–82 threads the bilayer; sequence LLTGAMIGLAIAGGAYVSTAD. Residues 150-154 and Ser174 each bind FMN; that span reads AGFDK. Residue Lys154 coordinates substrate. 199-203 contacts substrate; sequence NRCGF. A disordered region spans residues 219–247; it reads HGKRKMEETSSSTSPTTSDVKQGGKAGPG. Residues 227–236 are compositionally biased toward low complexity; that stretch reads TSSSTSPTTS. The FMN site is built by Asn252 and Asn283. 283 to 288 lines the substrate pocket; that stretch reads NVSSPN. Residue Ser286 is the Nucleophile of the active site. Residues Lys328 and Ser356 each coordinate FMN. Position 357 to 358 (357 to 358) interacts with substrate; it reads NT. FMN contacts are provided by residues Gly380, Gly409, and 430–431; that span reads YT.

The protein belongs to the dihydroorotate dehydrogenase family. Type 2 subfamily. FMN serves as cofactor.

Its subcellular location is the mitochondrion inner membrane. It carries out the reaction (S)-dihydroorotate + a quinone = orotate + a quinol. It participates in pyrimidine metabolism; UMP biosynthesis via de novo pathway; orotate from (S)-dihydroorotate (quinone route): step 1/1. Catalyzes the conversion of dihydroorotate to orotate with quinone as electron acceptor. In Oryza sativa subsp. japonica (Rice), this protein is Dihydroorotate dehydrogenase (quinone), mitochondrial (PYRD).